The following is a 948-amino-acid chain: Isoleucine--tRNA ligase (948 aa).

A 'HIGH' region motif is present at residues 58–68 (PYANGSIHIGH). E572 is a binding site for L-isoleucyl-5'-AMP. The 'KMSKS' region motif lies at 613 to 617 (KMSKS). An ATP-binding site is contributed by K616. Positions 911, 914, 931, and 934 each coordinate Zn(2+).

Belongs to the class-I aminoacyl-tRNA synthetase family. IleS type 1 subfamily. In terms of assembly, monomer. Requires Zn(2+) as cofactor.

The protein resides in the cytoplasm. The enzyme catalyses tRNA(Ile) + L-isoleucine + ATP = L-isoleucyl-tRNA(Ile) + AMP + diphosphate. Catalyzes the attachment of isoleucine to tRNA(Ile). As IleRS can inadvertently accommodate and process structurally similar amino acids such as valine, to avoid such errors it has two additional distinct tRNA(Ile)-dependent editing activities. One activity is designated as 'pretransfer' editing and involves the hydrolysis of activated Val-AMP. The other activity is designated 'posttransfer' editing and involves deacylation of mischarged Val-tRNA(Ile). In Edwardsiella ictaluri (strain 93-146), this protein is Isoleucine--tRNA ligase.